A 377-amino-acid chain; its full sequence is Alanine dehydrogenase (377 aa).

2 residues coordinate substrate: arginine 15 and lysine 74. Catalysis depends on histidine 95, which acts as the Proton donor/acceptor. Residues serine 133, aspartate 197, arginine 202, serine 219, 238 to 239 (VL), 266 to 269 (VAID), and 304 to 307 (VGNM) contribute to the NAD(+) site. The active-site Proton donor/acceptor is aspartate 269.

This sequence belongs to the AlaDH/PNT family. In terms of assembly, homohexamer.

It catalyses the reaction L-alanine + NAD(+) + H2O = pyruvate + NH4(+) + NADH + H(+). It functions in the pathway organosulfur degradation; alkanesulfonate degradation. Involved in an anaerobic respiration pathway that converts the sulfonate taurine (2-aminoethanesulfonate) to ammonia, acetate and sulfide. Acts as an alanine dehydrogenase that regenerates pyruvate, the amino group acceptor for the taurine--pyruvate aminotransferase enzyme, and liberates ammonia. The protein is Alanine dehydrogenase of Bilophila wadsworthia (strain 3_1_6).